The following is a 392-amino-acid chain: V-type proton ATPase subunit C (392 aa).

N-acetylalanine is present on A2.

It belongs to the V-ATPase C subunit family. In terms of assembly, V-ATPase is a heteromultimeric enzyme composed of a peripheral catalytic V1 complex (components A to H) attached to an integral membrane V0 proton pore complex (components: a, c, c', c'', d, e, f and VOA1). Interacts directly with VMA4.

It is found in the vacuole membrane. Its function is as follows. Subunit of the V1 complex of vacuolar(H+)-ATPase (V-ATPase), a multisubunit enzyme composed of a peripheral complex (V1) that hydrolyzes ATP and a membrane integral complex (V0) that translocates protons. V-ATPase is responsible for acidifying and maintaining the pH of intracellular compartments. Subunit C is necessary for the assembly of the catalytic sector of the enzyme and is likely to have a specific function in its catalytic activity. Reversibly leaves the enzyme after glucose depletion, causing the catalytic subcomplex V1 to detach from the V0 section. This chain is V-type proton ATPase subunit C, found in Saccharomyces cerevisiae (strain ATCC 204508 / S288c) (Baker's yeast).